We begin with the raw amino-acid sequence, 132 residues long: Transcription antitermination protein NusB (132 aa).

It belongs to the NusB family.

Its function is as follows. Involved in transcription antitermination. Required for transcription of ribosomal RNA (rRNA) genes. Binds specifically to the boxA antiterminator sequence of the ribosomal RNA (rrn) operons. The polypeptide is Transcription antitermination protein NusB (Campylobacter jejuni subsp. jejuni serotype O:2 (strain ATCC 700819 / NCTC 11168)).